An 83-amino-acid polypeptide reads, in one-letter code: Mu-theraphotoxin-Hhn2g (83 aa).

Positions 1 to 21 are cleaved as a signal peptide; that stretch reads MKASMYLALAGLVLLFVVGYA. Positions 22-48 are excised as a propeptide; sequence SESEEKEFPRELLSKIFAVDDFKGEER. 2 disulfides stabilise this stretch: cysteine 50–cysteine 65 and cysteine 57–cysteine 70. Leucine 81 is subject to Leucine amide.

The protein belongs to the neurotoxin 10 (Hwtx-1) family. 15 (Hntx-3) subfamily. As to quaternary structure, monomer. As to expression, expressed by the venom gland.

Its subcellular location is the secreted. Functionally, lethal neurotoxin. Selectively blocks tetrodotoxin-sensitive voltage-gated sodium channels (Nav). Does not affect tetrodotoxin-resistant voltage-gated sodium channels or calcium channels. The protein is Mu-theraphotoxin-Hhn2g of Cyriopagopus hainanus (Chinese bird spider).